The primary structure comprises 444 residues: ATP-dependent RNA helicase SrmB (444 aa).

Residues 4–32 (TTFSELELDESLLEALQDKGFTRPTAIQA) carry the Q motif motif. Residues 35–209 (IPPALDGRDV…AERLLEDPVE (175 aa)) enclose the Helicase ATP-binding domain. 48 to 55 (APTGTGKT) is a binding site for ATP. The short motif at 157–160 (DEAD) is the DEAD box element. One can recognise a Helicase C-terminal domain in the interval 238–387 (LLVHLLKQPE…ELRPKTRAPS (150 aa)). The span at 382-391 (KTRAPSEKQT) shows a compositional bias: basic and acidic residues. Residues 382-444 (KTRAPSEKQT…TGVPPQTTEE (63 aa)) are disordered. 2 stretches are compositionally biased toward basic residues: residues 394–406 (PSKK…AEKK) and 414–432 (PRVK…RRKP).

Belongs to the DEAD box helicase family. SrmB subfamily. In terms of assembly, interacts with the 50S ribosomal subunit. Forms a complex with the 50S ribosomal proteins L4 and L24, and a region near the 5'-end of 23S rRNA.

Its subcellular location is the cytoplasm. It carries out the reaction ATP + H2O = ADP + phosphate + H(+). Functionally, DEAD-box RNA helicase involved in the assembly of the 50S ribosomal subunit at low temperature. Exhibits RNA-stimulated ATP hydrolysis and RNA unwinding activity. Acts before DeaD. The polypeptide is ATP-dependent RNA helicase SrmB (Escherichia coli (strain K12)).